The chain runs to 517 residues: NEDD8-activating enzyme E1 regulatory subunit (517 aa).

This sequence belongs to the ubiquitin-activating E1 family. ULA1 subfamily. As to quaternary structure, heterodimer of uba3 and ula1. The complex binds NEDD8/ubl1 and ubc12.

The protein localises to the cytoplasm. It is found in the nucleus. It participates in protein modification; protein neddylation. Regulatory subunit of the dimeric uba3-ula1 E1 enzyme. E1 activates NEDD8/ubl1 by first adenylating its C-terminal glycine residue with ATP, thereafter linking this residue to the side chain of the catalytic cysteine, yielding a NEDD8-UBA3 thioester and free AMP. E1 finally transfers NEDD8 to the catalytic cysteine of ubc12. This is NEDD8-activating enzyme E1 regulatory subunit (uba5) from Schizosaccharomyces pombe (strain 972 / ATCC 24843) (Fission yeast).